The primary structure comprises 149 residues: D-aminoacyl-tRNA deacylase (149 aa).

Residues 137–138 (GP) carry the Gly-cisPro motif, important for rejection of L-amino acids motif.

It belongs to the DTD family. Homodimer.

It is found in the cytoplasm. The enzyme catalyses glycyl-tRNA(Ala) + H2O = tRNA(Ala) + glycine + H(+). The catalysed reaction is a D-aminoacyl-tRNA + H2O = a tRNA + a D-alpha-amino acid + H(+). In terms of biological role, an aminoacyl-tRNA editing enzyme that deacylates mischarged D-aminoacyl-tRNAs. Also deacylates mischarged glycyl-tRNA(Ala), protecting cells against glycine mischarging by AlaRS. Acts via tRNA-based rather than protein-based catalysis; rejects L-amino acids rather than detecting D-amino acids in the active site. By recycling D-aminoacyl-tRNA to D-amino acids and free tRNA molecules, this enzyme counteracts the toxicity associated with the formation of D-aminoacyl-tRNA entities in vivo and helps enforce protein L-homochirality. The sequence is that of D-aminoacyl-tRNA deacylase from Clostridioides difficile (strain 630) (Peptoclostridium difficile).